We begin with the raw amino-acid sequence, 702 residues long: Dissimilatory sulfite reductase MccA (702 aa).

Residues 1–39 (MLSGWSVLKGGNMKYWDKALLSLFMCVSTLSIAATHAVA) form the signal peptide. C155, C158, H159, and H171 together coordinate heme c. Residues K220 and Y297 each coordinate substrate. The heme c site is built by C314, C317, H318, C351, C354, H355, H360, C372, C375, and H376. R378 is a substrate binding site. C411 provides a ligand contact to Cu(+). Heme c is bound by residues H423, C430, C433, H434, H437, C474, C477, H478, H491, C496, C499, and H500. C507 serves as a coordination point for Cu(+). Positions 528, 574, 590, 591, and 675 each coordinate heme c.

The protein belongs to the multiheme cytochrome c family. Homotrimer. Cu(+) serves as cofactor. Heme c is required as a cofactor.

It localises to the periplasm. The catalysed reaction is [protein]-disulfide + hydrogen sulfide + 2 A + 3 H2O = [protein]-dithiol + sulfite + 2 AH2 + H(+). Its pathway is sulfur metabolism; sulfite reduction. Its function is as follows. Respiratory sulfite reductase that catalyzes the reduction of sulfite to sulfide in a single step, consuming six electrons in the process. Required for sulfite respiration under anaerobic growth conditions. Has only marginal activity with nitrite. The polypeptide is Dissimilatory sulfite reductase MccA (Wolinella succinogenes (strain ATCC 29543 / DSM 1740 / CCUG 13145 / JCM 31913 / LMG 7466 / NCTC 11488 / FDC 602W) (Vibrio succinogenes)).